We begin with the raw amino-acid sequence, 232 residues long: Phosphatidylserine decarboxylase proenzyme (232 aa).

Ser190 functions as the Schiff-base intermediate with substrate; via pyruvic acid in the catalytic mechanism. The residue at position 190 (Ser190) is a Pyruvic acid (Ser); by autocatalysis.

It belongs to the phosphatidylserine decarboxylase family. PSD-A subfamily. Heterodimer of a large membrane-associated beta subunit and a small pyruvoyl-containing alpha subunit. The cofactor is pyruvate. In terms of processing, is synthesized initially as an inactive proenzyme. Formation of the active enzyme involves a self-maturation process in which the active site pyruvoyl group is generated from an internal serine residue via an autocatalytic post-translational modification. Two non-identical subunits are generated from the proenzyme in this reaction, and the pyruvate is formed at the N-terminus of the alpha chain, which is derived from the carboxyl end of the proenzyme. The post-translation cleavage follows an unusual pathway, termed non-hydrolytic serinolysis, in which the side chain hydroxyl group of the serine supplies its oxygen atom to form the C-terminus of the beta chain, while the remainder of the serine residue undergoes an oxidative deamination to produce ammonia and the pyruvoyl prosthetic group on the alpha chain.

The protein localises to the cell membrane. The catalysed reaction is a 1,2-diacyl-sn-glycero-3-phospho-L-serine + H(+) = a 1,2-diacyl-sn-glycero-3-phosphoethanolamine + CO2. It functions in the pathway phospholipid metabolism; phosphatidylethanolamine biosynthesis; phosphatidylethanolamine from CDP-diacylglycerol: step 2/2. In terms of biological role, catalyzes the formation of phosphatidylethanolamine (PtdEtn) from phosphatidylserine (PtdSer). This is Phosphatidylserine decarboxylase proenzyme from Cereibacter sphaeroides (strain ATCC 17023 / DSM 158 / JCM 6121 / CCUG 31486 / LMG 2827 / NBRC 12203 / NCIMB 8253 / ATH 2.4.1.) (Rhodobacter sphaeroides).